The chain runs to 218 residues: Large ribosomal subunit protein uL3 (218 aa).

The protein belongs to the universal ribosomal protein uL3 family. In terms of assembly, part of the 50S ribosomal subunit. Forms a cluster with proteins L14 and L19.

One of the primary rRNA binding proteins, it binds directly near the 3'-end of the 23S rRNA, where it nucleates assembly of the 50S subunit. The polypeptide is Large ribosomal subunit protein uL3 (Corynebacterium jeikeium (strain K411)).